The chain runs to 62 residues: UPF0370 protein plu2724 (62 aa).

A helical transmembrane segment spans residues tryptophan 3–isoleucine 23. Residues aspartate 36–proline 62 are disordered.

The protein belongs to the UPF0370 family.

It localises to the cell membrane. The sequence is that of UPF0370 protein plu2724 from Photorhabdus laumondii subsp. laumondii (strain DSM 15139 / CIP 105565 / TT01) (Photorhabdus luminescens subsp. laumondii).